A 160-amino-acid chain; its full sequence is Phosphopantetheine adenylyltransferase (160 aa).

Thr9 serves as a coordination point for substrate. Residues 9 to 10 and His17 contribute to the ATP site; that span reads TF. Substrate contacts are provided by Lys41, Leu73, and Arg87. Residues 88 to 90, Glu98, and 123 to 129 each bind ATP; these read GLR and YSFISST.

This sequence belongs to the bacterial CoaD family. As to quaternary structure, homohexamer. It depends on Mg(2+) as a cofactor.

The protein resides in the cytoplasm. The enzyme catalyses (R)-4'-phosphopantetheine + ATP + H(+) = 3'-dephospho-CoA + diphosphate. Its pathway is cofactor biosynthesis; coenzyme A biosynthesis; CoA from (R)-pantothenate: step 4/5. Reversibly transfers an adenylyl group from ATP to 4'-phosphopantetheine, yielding dephospho-CoA (dPCoA) and pyrophosphate. This is Phosphopantetheine adenylyltransferase from Ectopseudomonas mendocina (strain ymp) (Pseudomonas mendocina).